The following is an 84-amino-acid chain: Antimicrobial peptide MeuNaTxbeta-2 (84 aa).

The signal sequence occupies residues 1–20; sequence MMKTVIVLIVFSLVMIVVKS. The LCN-type CS-alpha/beta domain maps to 21 to 83; it reads DNGYLLDKYT…LWHYETNRCR (63 aa). 4 disulfides stabilise this stretch: Cys-32/Cys-82, Cys-36/Cys-57, Cys-43/Cys-64, and Cys-47/Cys-66.

In terms of tissue distribution, expressed by the venom gland.

The protein resides in the secreted. Functionally, antimicrobial peptide with activity against both Gram-positive and -negative bacteria. The sequence is that of Antimicrobial peptide MeuNaTxbeta-2 from Mesobuthus eupeus (Lesser Asian scorpion).